The following is a 187-amino-acid chain: Tetratricopeptide repeat protein 36 (187 aa).

TPR repeat units follow at residues 47-80, 82-114, and 119-152; these read VKDLELQGVSSAESGDLPAALQHFNQAISVLPQR, SAYNNRAQTKRLLGDTKGAVEDLEHAISLSNGK, and CQALVQRGLLLRLSGHDEEARLDFERAAALGSEF.

The protein belongs to the TTC36 family.

The sequence is that of Tetratricopeptide repeat protein 36 (ttc36) from Danio rerio (Zebrafish).